The following is a 222-amino-acid chain: Large ribosomal subunit protein uL4 (222 aa).

Residues 67-87 (QKGTGNARAGSKRTNVRRGGG) are disordered.

It belongs to the universal ribosomal protein uL4 family. Part of the 50S ribosomal subunit.

Functionally, one of the primary rRNA binding proteins, this protein initially binds near the 5'-end of the 23S rRNA. It is important during the early stages of 50S assembly. It makes multiple contacts with different domains of the 23S rRNA in the assembled 50S subunit and ribosome. In terms of biological role, forms part of the polypeptide exit tunnel. This Rhodopirellula baltica (strain DSM 10527 / NCIMB 13988 / SH1) protein is Large ribosomal subunit protein uL4.